The following is a 353-amino-acid chain: S-adenosylmethionine:tRNA ribosyltransferase-isomerase (353 aa).

Belongs to the QueA family. Monomer.

It localises to the cytoplasm. The enzyme catalyses 7-aminomethyl-7-carbaguanosine(34) in tRNA + S-adenosyl-L-methionine = epoxyqueuosine(34) in tRNA + adenine + L-methionine + 2 H(+). It participates in tRNA modification; tRNA-queuosine biosynthesis. In terms of biological role, transfers and isomerizes the ribose moiety from AdoMet to the 7-aminomethyl group of 7-deazaguanine (preQ1-tRNA) to give epoxyqueuosine (oQ-tRNA). This is S-adenosylmethionine:tRNA ribosyltransferase-isomerase from Burkholderia vietnamiensis (strain G4 / LMG 22486) (Burkholderia cepacia (strain R1808)).